We begin with the raw amino-acid sequence, 590 residues long: Neuronal PAS domain-containing protein 1 (590 aa).

The 54-residue stretch at glutamine 45–arginine 98 folds into the bHLH domain. The region spanning glutamate 135–proline 207 is the PAS 1 domain. The interval leucine 198–isoleucine 229 is disordered. Low complexity predominate over residues serine 212 to serine 222. Residues alanine 293–aspartate 359 form the PAS 2 domain. The PAC domain occupies threonine 365–alanine 408. The segment at alanine 425–phenylalanine 494 is disordered. The segment covering glycine 433–proline 442 has biased composition (pro residues). Over residues isoleucine 463 to glutamate 476 the composition is skewed to basic and acidic residues.

As to quaternary structure, efficient DNA binding requires dimerization with another bHLH protein. Interacts with ARNT; forms a heterodimer that binds core DNA sequence 5'-[AG]CGTG-3' within the hypoxia response element (HRE) leading to a transcriptional repressor on its target gene TH.

It localises to the nucleus. In terms of biological role, may control regulatory pathways relevant to schizophrenia and to psychotic illness. May play a role in late central nervous system development by modulating EPO expression in response to cellular oxygen level. Forms a heterodimer that binds core DNA sequence 5'-TACGTG-3' within the hypoxia response element (HRE) leading to transcriptional repression on its target gene TH. This chain is Neuronal PAS domain-containing protein 1 (NPAS1), found in Homo sapiens (Human).